Reading from the N-terminus, the 471-residue chain is Glutamate--tRNA ligase (471 aa).

The 'HIGH' region signature appears at 9–19; sequence PSPTGYLHVGG. Zn(2+) contacts are provided by Cys98, Cys100, Cys125, and His127. The 'KMSKS' region motif lies at 237-241; it reads KLSKR. Lys240 contributes to the ATP binding site.

This sequence belongs to the class-I aminoacyl-tRNA synthetase family. Glutamate--tRNA ligase type 1 subfamily. As to quaternary structure, monomer. Requires Zn(2+) as cofactor.

It is found in the cytoplasm. It carries out the reaction tRNA(Glu) + L-glutamate + ATP = L-glutamyl-tRNA(Glu) + AMP + diphosphate. Catalyzes the attachment of glutamate to tRNA(Glu) in a two-step reaction: glutamate is first activated by ATP to form Glu-AMP and then transferred to the acceptor end of tRNA(Glu). The sequence is that of Glutamate--tRNA ligase from Escherichia coli (strain SMS-3-5 / SECEC).